A 104-amino-acid polypeptide reads, in one-letter code: Complex III assembly factor LYRM7 (104 aa).

This sequence belongs to the complex I LYR family. As to quaternary structure, interacts with UQCRFS1.

It is found in the mitochondrion matrix. Assembly factor required for Rieske Fe-S protein UQCRFS1 incorporation into the cytochrome b-c1 (CIII) complex. Functions as a chaperone, binding to this subunit within the mitochondrial matrix and stabilizing it prior to its translocation and insertion into the late CIII dimeric intermediate within the mitochondrial inner membrane. The chain is Complex III assembly factor LYRM7 (lyrm7) from Tetraodon nigroviridis (Spotted green pufferfish).